A 490-amino-acid polypeptide reads, in one-letter code: RNA-binding protein P (490 aa).

Residues 1-112 (MGKKRKLDSK…EEEEAAERDA (112 aa)) form a disordered region. Over residues 13 to 36 (AAARSAAARAAAAAAAAAAAAAVA) the composition is skewed to low complexity. Positions 74–108 (GGEEEEVEEVEVEEEVEVDEDEDGEGEGEEEEEAA) are enriched in acidic residues. RRM domains follow at residues 156–233 (RKIF…LASV) and 267–343 (RKIF…QKAI).

In terms of assembly, forms homodimers. Interacts with RBP-L and RBP-208. Interacts with NSF.

It localises to the nucleus. Its subcellular location is the cytoplasm. Its function is as follows. RNA-binding protein that binds to a cis-localization element or zipcode, within the 5'-CDS of prolamine RNA. Binds strongly to glutelin mRNA, particularly to 3'-UTR and zipcode RNA. Recognizes and binds to glutelin zipcode RNA, which is required for proper mRNA localization to cisternal endoplasmic reticulum. Exhibits strong binding activity to a glutelin intron sequence and may participate in mRNA splicing. Required for the correct localization of glutelin and prolamine mRNA in endosperm cells during grain development. RBP-P and RBP-L form a quaternary complex with the membrane trafficking factors NSF and RAB5A. This quaternay complex carries glutelin mRNAs for active transport on endosomes to the cortical endoplasmic reticulum membrane, and enables endosome-mediated glutelin mRNA transport in endosperm cells. The protein is RNA-binding protein P of Oryza sativa subsp. japonica (Rice).